The primary structure comprises 147 residues: Hemoglobin subunit beta (147 aa).

N-acetylvaline is present on valine 2. A Globin domain is found at 3-147 (HLTGDEKAAV…VANALAHKYH (145 aa)). The residue at position 13 (threonine 13) is a Phosphothreonine. A Phosphoserine modification is found at serine 45. N6-acetyllysine is present on lysine 60. Heme b is bound at residue histidine 64. N6-acetyllysine is present on lysine 83. Position 93 (histidine 93) interacts with heme b. Residue cysteine 94 is modified to S-nitrosocysteine. An N6-acetyllysine modification is found at lysine 145.

It belongs to the globin family. Heterotetramer of two alpha chains and two beta chains. In terms of tissue distribution, red blood cells.

Its function is as follows. Involved in oxygen transport from the lung to the various peripheral tissues. This is Hemoglobin subunit beta (HBB) from Alouatta belzebul (Red-handed howler monkey).